Reading from the N-terminus, the 113-residue chain is N(2)-fixation sustaining protein CowN (113 aa).

The protein belongs to the CowN family.

Functionally, is required to sustain N(2)-dependent growth in the presence of low levels of carbon monoxide (CO). Probably acts by protecting the N(2) fixation ability of the nitrogenase complex, which is inactivated in the presence of CO. The sequence is that of N(2)-fixation sustaining protein CowN from Wolinella succinogenes (strain ATCC 29543 / DSM 1740 / CCUG 13145 / JCM 31913 / LMG 7466 / NCTC 11488 / FDC 602W) (Vibrio succinogenes).